The following is a 345-amino-acid chain: Isocitrate lyase (345 aa).

58-60 serves as a coordination point for substrate; that stretch reads SGY. Asp-98 serves as a coordination point for Mg(2+). Catalysis depends on Cys-135, which acts as the Proton acceptor. Substrate is bound by residues 136–137, Arg-170, 230–234, and Thr-260; these read GH and NYSSS. Residues 318-345 are disordered; it reads DPEARRRIEESEGFSEEQADPITSNDDD. A compositionally biased stretch (acidic residues) spans 328–345; the sequence is SEGFSEEQADPITSNDDD.

In terms of assembly, homotetramer or homotrimer. Mg(2+) is required as a cofactor.

It carries out the reaction D-threo-isocitrate = glyoxylate + succinate. Its pathway is carbohydrate metabolism; glyoxylate cycle; (S)-malate from isocitrate: step 1/2. Functionally, involved in the metabolic adaptation in response to environmental changes. Catalyzes the reversible formation of succinate and glyoxylate from isocitrate, a key step of the glyoxylate cycle, which operates as an anaplerotic route for replenishing the tricarboxylic acid cycle during growth on fatty acid substrates. In Haloferax volcanii (strain ATCC 29605 / DSM 3757 / JCM 8879 / NBRC 14742 / NCIMB 2012 / VKM B-1768 / DS2) (Halobacterium volcanii), this protein is Isocitrate lyase (aceA).